The following is a 344-amino-acid chain: uncharacterized protein (344 aa).

The protein belongs to the glycosyltransferase 28 family.

This is an uncharacterized protein from Methanopyrus kandleri (strain AV19 / DSM 6324 / JCM 9639 / NBRC 100938).